The following is a 359-amino-acid chain: UDP-N-acetylglucosamine--N-acetylmuramyl-(pentapeptide) pyrophosphoryl-undecaprenol N-acetylglucosamine transferase (359 aa).

UDP-N-acetyl-alpha-D-glucosamine-binding positions include 15 to 17 (TGG), asparagine 127, arginine 166, serine 191, isoleucine 245, 264 to 269 (ALTVSE), and glutamine 290.

Belongs to the glycosyltransferase 28 family. MurG subfamily.

It localises to the cell inner membrane. It carries out the reaction di-trans,octa-cis-undecaprenyl diphospho-N-acetyl-alpha-D-muramoyl-L-alanyl-D-glutamyl-meso-2,6-diaminopimeloyl-D-alanyl-D-alanine + UDP-N-acetyl-alpha-D-glucosamine = di-trans,octa-cis-undecaprenyl diphospho-[N-acetyl-alpha-D-glucosaminyl-(1-&gt;4)]-N-acetyl-alpha-D-muramoyl-L-alanyl-D-glutamyl-meso-2,6-diaminopimeloyl-D-alanyl-D-alanine + UDP + H(+). Its pathway is cell wall biogenesis; peptidoglycan biosynthesis. Cell wall formation. Catalyzes the transfer of a GlcNAc subunit on undecaprenyl-pyrophosphoryl-MurNAc-pentapeptide (lipid intermediate I) to form undecaprenyl-pyrophosphoryl-MurNAc-(pentapeptide)GlcNAc (lipid intermediate II). The polypeptide is UDP-N-acetylglucosamine--N-acetylmuramyl-(pentapeptide) pyrophosphoryl-undecaprenol N-acetylglucosamine transferase (Pseudomonas putida (strain GB-1)).